Reading from the N-terminus, the 431-residue chain is Tol-Pal system protein TolB (431 aa).

The signal sequence occupies residues 1–26 (MRLMTKLGFRALVASCLIAAGGAANA). Residues 411 to 431 (PQILSVQGGSVREPSWGPFMQ) are disordered.

Belongs to the TolB family. As to quaternary structure, the Tol-Pal system is composed of five core proteins: the inner membrane proteins TolA, TolQ and TolR, the periplasmic protein TolB and the outer membrane protein Pal. They form a network linking the inner and outer membranes and the peptidoglycan layer.

It is found in the periplasm. In terms of biological role, part of the Tol-Pal system, which plays a role in outer membrane invagination during cell division and is important for maintaining outer membrane integrity. This is Tol-Pal system protein TolB from Burkholderia ambifaria (strain MC40-6).